Reading from the N-terminus, the 450-residue chain is Probable ECA polymerase (450 aa).

11 helical membrane passes run phenylalanine 6–phenylalanine 26, valine 37–leucine 57, valine 63–alanine 83, valine 118–leucine 138, glycine 155–leucine 175, alanine 181–glycine 201, isoleucine 207–tryptophan 227, methionine 228–tyrosine 248, leucine 341–isoleucine 361, tyrosine 378–alanine 398, and valine 410–phenylalanine 430.

It belongs to the WzyE family. In terms of assembly, probably part of a complex composed of WzxE, WzyE and WzzE.

Its subcellular location is the cell inner membrane. It functions in the pathway bacterial outer membrane biogenesis; enterobacterial common antigen biosynthesis. Functionally, probably involved in the polymerization of enterobacterial common antigen (ECA) trisaccharide repeat units. This chain is Probable ECA polymerase, found in Escherichia coli O139:H28 (strain E24377A / ETEC).